The sequence spans 299 residues: Acetylglutamate kinase (299 aa).

Substrate contacts are provided by residues 70–71 (GG), Arg-92, and Asn-197.

It belongs to the acetylglutamate kinase family. ArgB subfamily.

The protein localises to the cytoplasm. It catalyses the reaction N-acetyl-L-glutamate + ATP = N-acetyl-L-glutamyl 5-phosphate + ADP. It functions in the pathway amino-acid biosynthesis; L-arginine biosynthesis; N(2)-acetyl-L-ornithine from L-glutamate: step 2/4. In terms of biological role, catalyzes the ATP-dependent phosphorylation of N-acetyl-L-glutamate. The sequence is that of Acetylglutamate kinase from Acidiphilium cryptum (strain JF-5).